The primary structure comprises 340 residues: Glycerol-3-phosphate dehydrogenase [NAD(P)+] (340 aa).

Ser11, Trp12, Arg33, and Lys106 together coordinate NADPH. Lys106, Gly137, and Ser139 together coordinate sn-glycerol 3-phosphate. Residue Ala141 coordinates NADPH. Positions 192, 245, 255, 256, and 257 each coordinate sn-glycerol 3-phosphate. The Proton acceptor role is filled by Lys192. Arg256 is a binding site for NADPH. The NADPH site is built by Val280 and Glu282.

This sequence belongs to the NAD-dependent glycerol-3-phosphate dehydrogenase family.

It is found in the cytoplasm. It catalyses the reaction sn-glycerol 3-phosphate + NAD(+) = dihydroxyacetone phosphate + NADH + H(+). The catalysed reaction is sn-glycerol 3-phosphate + NADP(+) = dihydroxyacetone phosphate + NADPH + H(+). It participates in membrane lipid metabolism; glycerophospholipid metabolism. In terms of biological role, catalyzes the reduction of the glycolytic intermediate dihydroxyacetone phosphate (DHAP) to sn-glycerol 3-phosphate (G3P), the key precursor for phospholipid synthesis. This Bacillus cereus (strain 03BB102) protein is Glycerol-3-phosphate dehydrogenase [NAD(P)+].